A 168-amino-acid chain; its full sequence is uncharacterized protein (168 aa).

Positions 18-73 are disordered; the sequence is RTTVKTKSHNPKTLYPNNKPRWESKLHAGPKGFQSSRTSEKPGRPDPDPEDDPPIP. Residues 55 to 64 are compositionally biased toward basic and acidic residues; sequence TSEKPGRPDP. The next 2 membrane-spanning stretches (helical) occupy residues 84–104 and 113–133; these read IVVS…VLEV and VPLW…ALGI.

It localises to the membrane. This is an uncharacterized protein from Arabidopsis thaliana (Mouse-ear cress).